The primary structure comprises 367 residues: DNA replication and repair protein RecF (367 aa).

Position 30 to 37 (30 to 37 (GENAQGKT)) interacts with ATP.

This sequence belongs to the RecF family.

The protein localises to the cytoplasm. Functionally, the RecF protein is involved in DNA metabolism; it is required for DNA replication and normal SOS inducibility. RecF binds preferentially to single-stranded, linear DNA. It also seems to bind ATP. In Chlamydia abortus (strain DSM 27085 / S26/3) (Chlamydophila abortus), this protein is DNA replication and repair protein RecF.